The following is a 184-amino-acid chain: CASP-like protein 1U2 (184 aa).

Topologically, residues 1-16 (MSYGCQVSDDEPNGSK) are cytoplasmic. Residues 17–37 (AVSLLLRLSTLALALTSAVVM) form a helical membrane-spanning segment. Residues 38-62 (ATASECTVVQLNGVVATITYKDFPP) are Extracellular-facing. Residues 63 to 83 (FVYLVGFNIAAAMLEAAAIYL) traverse the membrane as a helical segment. Residues 84 to 100 (RLSTGGGDDDDEGFKGK) are Cytoplasmic-facing. A helical transmembrane segment spans residues 101 to 121 (LPGILLVVIDVAVQALVYTAT). Topologically, residues 122 to 153 (GGAFAAVSAYGPQINACGAGAGRFCGQVHQSK) are extracellular. Residues 154–174 (LLSFAGSAAVGLAVVFRDVSL) traverse the membrane as a helical segment. The Cytoplasmic segment spans residues 175–184 (PFSLWPTSSD).

It belongs to the Casparian strip membrane proteins (CASP) family. Homodimer and heterodimers.

It localises to the cell membrane. The sequence is that of CASP-like protein 1U2 from Oryza sativa subsp. japonica (Rice).